The primary structure comprises 397 residues: MEEIGIVIVGGGIAGLATSIALHRKGIKSVVLERAEKVRSEGAGIGTLSNGWRALDQLGVGDRLRLNSSLIHKARTMLIENGKKREFVSNIVDEARCIKRNDLVEALSDALPKGTIRFGSHIVSIEQDKTTLFPVVHLANGNSIKAKVLIGCDGANSIVSDYLQLNPKKAFACRAVRGFTKYPNGHGFPQEVLRIKQGNVLIGRLPLTDNQVFWFLVHMQDNNHNGKDQESIANLCRKWADDLSEDWKEMVKICNVESLTLTHLRYRAPSEIMLGKFRRGTVTVAGDAMHVMGPFLAQGGSAALEDAVVLARCLARKVGPDHGDLLKDCSMKNIEEAIDEYVDERRMRLLGLSVQTYLTGRSLQTSSKVLRLMFIALLLLLFGRDQIRHTRYDCGRL.

It belongs to the 3-hydroxybenzoate 6-hydroxylase family. Monomer. Requires FAD as cofactor. Expressed in seedlings, roots, leaves, flowers and siliques.

This chain is Monooxygenase 1, found in Arabidopsis thaliana (Mouse-ear cress).